Consider the following 127-residue polypeptide: Modulator protein MzrA (127 aa).

At 1-9 the chain is on the cytoplasmic side; it reads MQLPRVTLR. Residues 10–32 traverse the membrane as a helical segment; it reads QMTWTTSAIVLLGITLLLWSAFR. Residues 33–127 lie on the Periplasmic side of the membrane; it reads HQESTLAIRA…LLRDTSHRFG (95 aa).

This sequence belongs to the MzrA family. Interacts with EnvZ.

The protein resides in the cell inner membrane. Its function is as follows. Modulates the activity of the EnvZ/OmpR two-component regulatory system, probably by directly modulating EnvZ enzymatic activity and increasing stability of phosphorylated OmpR. The sequence is that of Modulator protein MzrA from Escherichia fergusonii (strain ATCC 35469 / DSM 13698 / CCUG 18766 / IAM 14443 / JCM 21226 / LMG 7866 / NBRC 102419 / NCTC 12128 / CDC 0568-73).